A 234-amino-acid chain; its full sequence is Preprocaerulein type-4 (234 aa).

The signal sequence occupies residues M1–A26. A propeptide spanning residues D27 to G73 is cleaved from the precursor. Y77 is subject to Sulfotyrosine. The residue at position 83 (F83) is a Phenylalanine amide. A propeptide spanning residues D87–G137 is cleaved from the precursor. Y141 carries the sulfotyrosine modification. F147 is modified (phenylalanine amide). A propeptide spanning residues D151–G152 is cleaved from the precursor. Y156 is modified (sulfotyrosine). Phenylalanine amide is present on F162. A propeptide spanning residues D166 to G216 is cleaved from the precursor. A disordered region spans residues L198–D234. Y220 bears the Sulfotyrosine mark. F226 is modified (phenylalanine amide). Positions N230 to D234 are excised as a propeptide.

This sequence belongs to the gastrin/cholecystokinin family. Expressed by the skin glands.

The protein resides in the secreted. Functionally, the pharmacological activities of caerulein are quite similar to the physiological activities of gastrin and related peptides. This chain is Preprocaerulein type-4, found in Xenopus borealis (Kenyan clawed frog).